The primary structure comprises 372 residues: Cytochrome b (372 aa).

4 helical membrane-spanning segments follow: residues 25–45 (FGSM…FLAL), 69–90 (WIMQ…YIHI), 105–125 (WLSG…GYVL), and 170–190 (FFAL…IHII). Heme b is bound by residues His-75 and His-89. Positions 174 and 188 each coordinate heme b. Position 193 (His-193) interacts with a ubiquinone. 4 helical membrane-spanning segments follow: residues 218–238 (YKDM…LSFA), 280–300 (LGGT…PFTH), 312–332 (LSQI…WTAS), and 339–358 (FITI…ITTP).

The protein belongs to the cytochrome b family. The cytochrome bc1 complex contains 3 respiratory subunits (MT-CYB, CYC1 and UQCRFS1), 2 core proteins (UQCRC1 and UQCRC2) and probably 6 low-molecular weight proteins. Heme b serves as cofactor.

It is found in the mitochondrion inner membrane. Its function is as follows. Component of the ubiquinol-cytochrome c reductase complex (complex III or cytochrome b-c1 complex) that is part of the mitochondrial respiratory chain. The b-c1 complex mediates electron transfer from ubiquinol to cytochrome c. Contributes to the generation of a proton gradient across the mitochondrial membrane that is then used for ATP synthesis. The sequence is that of Cytochrome b (MT-CYB) from Naja nivea (Cape cobra).